A 522-amino-acid chain; its full sequence is AAA ATPase forming ring-shaped complexes (522 aa).

Positions 1 to 26 (MGQEKHTDAASQSRDPEAVAAHENDQ) are disordered. Positions 20-57 (AAHENDQLRQRNHALAKALTRATEELRKAKAQLEQFMA) form a coiled coil. Residue 248-253 (GNGKTL) participates in ATP binding.

This sequence belongs to the AAA ATPase family. Homohexamer. Assembles into a hexameric ring structure.

This is AAA ATPase forming ring-shaped complexes from Bifidobacterium animalis subsp. lactis (strain AD011).